The following is a 520-amino-acid chain: Peptide chain release factor 3 (520 aa).

The tr-type G domain occupies 8–277 (ESRKTFAIIS…HAPMPNARQT (270 aa)). Residues 17–24 (SHPDAGKT), 85–89 (DTPGH), and 139–142 (NKLD) each bind GTP.

Belongs to the TRAFAC class translation factor GTPase superfamily. Classic translation factor GTPase family. PrfC subfamily.

The protein localises to the cytoplasm. Increases the formation of ribosomal termination complexes and stimulates activities of RF-1 and RF-2. It binds guanine nucleotides and has strong preference for UGA stop codons. It may interact directly with the ribosome. The stimulation of RF-1 and RF-2 is significantly reduced by GTP and GDP, but not by GMP. The chain is Peptide chain release factor 3 from Staphylococcus saprophyticus subsp. saprophyticus (strain ATCC 15305 / DSM 20229 / NCIMB 8711 / NCTC 7292 / S-41).